Consider the following 227-residue polypeptide: MAYPLQLGLQDASSPIMEELMNFHDHTLMIVFLISSLVLYLISLMLTTKLIHTSTMDAQEVETVWTILPAIILILIALPSLRILYMMDEINNPVLTVKTMGHQWYWSYEYTDFEDLSFDSYMIPTNELKPGELRQLEVDNRMVLPMELPIRMLISSEDVLHSWAVPSLGLKTDAIPGRLNQATVTSNRPGVFYGQCSEICGSNHSFMPIVLEMIPLKLFENWSLSLT.

Over 1 to 14 the chain is Mitochondrial intermembrane; the sequence is MAYPLQLGLQDASS. Residues 15–45 traverse the membrane as a helical segment; that stretch reads PIMEELMNFHDHTLMIVFLISSLVLYLISLM. The Mitochondrial matrix segment spans residues 46–59; the sequence is LTTKLIHTSTMDAQ. The helical transmembrane segment at 60 to 87 threads the bilayer; it reads EVETVWTILPAIILILIALPSLRILYMM. The Mitochondrial intermembrane portion of the chain corresponds to 88–227; that stretch reads DEINNPVLTV…LFENWSLSLT (140 aa). Residues His-161, Cys-196, Glu-198, Cys-200, His-204, and Met-207 each coordinate Cu cation. Residue Glu-198 participates in Mg(2+) binding.

It belongs to the cytochrome c oxidase subunit 2 family. As to quaternary structure, component of the cytochrome c oxidase (complex IV, CIV), a multisubunit enzyme composed of 14 subunits. The complex is composed of a catalytic core of 3 subunits MT-CO1, MT-CO2 and MT-CO3, encoded in the mitochondrial DNA, and 11 supernumerary subunits COX4I, COX5A, COX5B, COX6A, COX6B, COX6C, COX7A, COX7B, COX7C, COX8 and NDUFA4, which are encoded in the nuclear genome. The complex exists as a monomer or a dimer and forms supercomplexes (SCs) in the inner mitochondrial membrane with NADH-ubiquinone oxidoreductase (complex I, CI) and ubiquinol-cytochrome c oxidoreductase (cytochrome b-c1 complex, complex III, CIII), resulting in different assemblies (supercomplex SCI(1)III(2)IV(1) and megacomplex MCI(2)III(2)IV(2)). Found in a complex with TMEM177, COA6, COX18, COX20, SCO1 and SCO2. Interacts with TMEM177 in a COX20-dependent manner. Interacts with COX20. Interacts with COX16. It depends on Cu cation as a cofactor.

The protein resides in the mitochondrion inner membrane. The enzyme catalyses 4 Fe(II)-[cytochrome c] + O2 + 8 H(+)(in) = 4 Fe(III)-[cytochrome c] + 2 H2O + 4 H(+)(out). Component of the cytochrome c oxidase, the last enzyme in the mitochondrial electron transport chain which drives oxidative phosphorylation. The respiratory chain contains 3 multisubunit complexes succinate dehydrogenase (complex II, CII), ubiquinol-cytochrome c oxidoreductase (cytochrome b-c1 complex, complex III, CIII) and cytochrome c oxidase (complex IV, CIV), that cooperate to transfer electrons derived from NADH and succinate to molecular oxygen, creating an electrochemical gradient over the inner membrane that drives transmembrane transport and the ATP synthase. Cytochrome c oxidase is the component of the respiratory chain that catalyzes the reduction of oxygen to water. Electrons originating from reduced cytochrome c in the intermembrane space (IMS) are transferred via the dinuclear copper A center (CU(A)) of subunit 2 and heme A of subunit 1 to the active site in subunit 1, a binuclear center (BNC) formed by heme A3 and copper B (CU(B)). The BNC reduces molecular oxygen to 2 water molecules using 4 electrons from cytochrome c in the IMS and 4 protons from the mitochondrial matrix. The polypeptide is Cytochrome c oxidase subunit 2 (MT-CO2) (Taterillus emini (Emin's gerbil)).